We begin with the raw amino-acid sequence, 446 residues long: MKFSTQKPKKTLHMVSLGCTKNLVDSEVMLGRLSDYQLTDDAQNADVIIVNTCGFIDSAKQESINTILSLHEDRKNESVLVMAGCLSERYKEELQKELPEIDVFTGVGDYDRIDELVNEKRSNFTSEVFLASETNERVITGSSYHAYVKLSEGCNQACSFCAIPSFKGKLHSRTLQSLVKEVKALVAKGYVDFSFVSQDSSSFLRDLDIKNGLELLVEEVEKIEGIKTARILYLYPSTTTLSLIDKIADSKVFVNYFDMPLQHITPSMLKIMKRGKGVEQLNELMNHMKSKPNSFVRTTFIAGHPGETEDDFEALCNYVENFKFDRANVFSYSDEEGTTAETRTDKVEQELIDERAEVLGEIISQTTQESLESEVGKTFEVYIDGESEEHEYLLSARKTIWAPSIDGEIYINDNELSEGEQIKFGQIYTVKITELVGDKLLATVIK.

An MTTase N-terminal domain is found at 10–122; it reads KTLHMVSLGC…IDELVNEKRS (113 aa). [4Fe-4S] cluster contacts are provided by Cys-19, Cys-53, Cys-85, Cys-154, Cys-158, and Cys-161. Residues 140-369 enclose the Radical SAM core domain; sequence TGSSYHAYVK…GEIISQTTQE (230 aa). The region spanning 372–446 is the TRAM domain; that stretch reads ESEVGKTFEV…GDKLLATVIK (75 aa).

This sequence belongs to the methylthiotransferase family. RimO subfamily. Requires [4Fe-4S] cluster as cofactor.

Its subcellular location is the cytoplasm. It carries out the reaction L-aspartate(89)-[ribosomal protein uS12]-hydrogen + (sulfur carrier)-SH + AH2 + 2 S-adenosyl-L-methionine = 3-methylsulfanyl-L-aspartate(89)-[ribosomal protein uS12]-hydrogen + (sulfur carrier)-H + 5'-deoxyadenosine + L-methionine + A + S-adenosyl-L-homocysteine + 2 H(+). Functionally, catalyzes the methylthiolation of an aspartic acid residue of ribosomal protein uS12. The sequence is that of Ribosomal protein uS12 methylthiotransferase RimO from Aliarcobacter butzleri (strain RM4018) (Arcobacter butzleri).